Here is a 193-residue protein sequence, read N- to C-terminus: Ion-translocating oxidoreductase complex subunit B (193 aa).

The hydrophobic stretch occupies residues 1-26 (MSTMLIAVILLTLLALFFGVLLGFAA). The region spanning 32-90 (EGNPIVDELEAILPQTQCGQCGYPGCRPYAEAIANGDKVNKCPPGGTATMEKLASLMGV) is the 4Fe-4S domain. 12 residues coordinate [4Fe-4S] cluster: Cys-49, Cys-52, Cys-57, Cys-73, Cys-114, Cys-117, Cys-120, Cys-124, Cys-144, Cys-147, Cys-150, and Cys-154. 2 4Fe-4S ferredoxin-type domains span residues 105–134 (KVAYIREDECIGCTKCIQACPVDAIIGAGK) and 136–164 (MHTVLTADCTGCDLCVEPCPVDCIDMLPV).

The protein belongs to the 4Fe4S bacterial-type ferredoxin family. RnfB subfamily. As to quaternary structure, the complex is composed of six subunits: RnfA, RnfB, RnfC, RnfD, RnfE and RnfG. It depends on [4Fe-4S] cluster as a cofactor.

It localises to the cell inner membrane. Part of a membrane-bound complex that couples electron transfer with translocation of ions across the membrane. The sequence is that of Ion-translocating oxidoreductase complex subunit B from Shewanella sp. (strain MR-4).